Consider the following 382-residue polypeptide: Small ribosomal subunit protein bS1 homolog (382 aa).

S1 motif domains are found at residues 18–85 (GDVV…LSKR), 103–168 (GHVF…LSHK), 189–257 (GDVV…LSIK), and 274–343 (GDIR…LSIK). Serine 244 is modified (phosphoserine).

It belongs to the bacterial ribosomal protein bS1 family.

In Bacillus cereus (strain ATCC 10987 / NRS 248), this protein is Small ribosomal subunit protein bS1 homolog.